The chain runs to 336 residues: Ribosomal RNA large subunit methyltransferase F (336 aa).

This sequence belongs to the methyltransferase superfamily. METTL16/RlmF family.

It is found in the cytoplasm. The enzyme catalyses adenosine(1618) in 23S rRNA + S-adenosyl-L-methionine = N(6)-methyladenosine(1618) in 23S rRNA + S-adenosyl-L-homocysteine + H(+). Specifically methylates the adenine in position 1618 of 23S rRNA. This is Ribosomal RNA large subunit methyltransferase F from Yersinia pseudotuberculosis serotype I (strain IP32953).